Consider the following 705-residue polypeptide: MNPLQSIQHNITTPPISGGQPLDAVGPQAQKSHPKRISPSQLSQSAHQALERLSANAEHQRLASLVRKALQDGTFQFQSSNHTQVTYKASICLPADTDTVRTDLLINNELTVKARLNDQSEYDIVSAHLHGSSKAISFDVPSPPPAHGSASSVLSERTHLVMSRVLSQDAVDSSRLETSLLSSPDHSRPPSQPKPVHLGSVRRESGSLVSDNPVVQALLSFAQADQAFPPQAASIAGVQLEMRPRRDIEKALEEFKGAFTVEKAQLMSGANSSERVDEDVNADIHIPLLLKAIERGAAAFGPNASIGQNSAKAFLASCAPKITSNDDVLSEFINQKLKGDDDLQVRLGAQELLHVATKKEFQLGGLAGSIGVSSILGSAWELGASELLKNAIFGKNFSPSQYALQLAGIDSVPPLIIESMDTMCVLAIIKGMKGEEWSMSDLLPKALKAGAISSVVSFPNNVLQYAGFKSRVGDLAANSVTTEAAIFGAASGIPPEVKESEELMRAGLFQSMKDGVMAHPGEGVDTKKTIERMTRHALDIAPGESTAVKSMGLASIVGMIPLIASNKATGLLSEQVLRIFRSAVFNPIEAIALNALALGGRVNVPGLFDSDNAKHARVVQTILARASQHMEAGDRDISAEELHQMLAPRSEFLRHVGSAIVNGMNASFEAIPALVRKLGYGEAPLAERIPYQDLAVPDTSRQPAP.

A compositionally biased stretch (polar residues) spans methionine 1–proline 15. 2 disordered regions span residues methionine 1–serine 40 and arginine 175–serine 205.

The protein localises to the secreted. Its function is as follows. Effector protein involved in non-host recognition. This is Effector protein AvrPphDPsv (avrPphDPsv) from Pseudomonas savastanoi (Pseudomonas syringae pv. savastanoi).